The chain runs to 381 residues: MRMHNKIQLLSVLNTHLVAYPTPMNLNYSWNGGSLAGMMLASQMLTGILLAMHYVGHVDYAFASVQHLMTDVPSGMILRYAHANGASLFFIVVYLHVLRGMYYGSGAQPREIVWISGVVILLVMIITAFIGYVLPWGQMSFWGATVITSLATAIPVVGKHIMYWLWGGFSVDNPTLNRFYSFHYTLPFILAGLSVFHIAALHQYGSTNPLGVNSQSSLISFGSYFGAKDLVGALFLALVFSILVFFYPDLLGHPDNLIPANPYSTPQHIVPEWYFLWVYAILRSIPNKAMGVLAIGLVFASLFAMPFIGLGGGKFRIITEWLYWTFLADVLLLTWLGGNEITPITSFVGQCCTAYLFFYLLVCQPLVGYLETQFAHGTQTN.

4 consecutive transmembrane segments (helical) span residues 32 to 52 (GGSLAGMMLASQMLTGILLAM), 76 to 98 (MILRYAHANGASLFFIVVYLHVL), 113 to 133 (VWISGVVILLVMIITAFIGYV), and 179 to 199 (FYSFHYTLPFILAGLSVFHIA). Heme b contacts are provided by His-82 and His-96. 2 residues coordinate heme b: His-183 and His-197. Position 202 (His-202) interacts with a ubiquinone. 4 helical membrane-spanning segments follow: residues 225 to 245 (FGAKDLVGALFLALVFSILVF), 289 to 309 (AMGVLAIGLVFASLFAMPFIG), 318 to 338 (ITEWLYWTFLADVLLLTWLGG), and 345 to 365 (TSFVGQCCTAYLFFYLLVCQP).

The protein belongs to the cytochrome b family. In terms of assembly, the main subunits of complex b-c1 are: cytochrome b, cytochrome c1 and the Rieske protein. Heme b serves as cofactor.

It is found in the mitochondrion inner membrane. Functionally, component of the ubiquinol-cytochrome c reductase complex (complex III or cytochrome b-c1 complex) that is part of the mitochondrial respiratory chain. The b-c1 complex mediates electron transfer from ubiquinol to cytochrome c. Contributes to the generation of a proton gradient across the mitochondrial membrane that is then used for ATP synthesis. In Chlamydomonas reinhardtii (Chlamydomonas smithii), this protein is Cytochrome b (MT-CYB).